The following is an 80-amino-acid chain: Acyl carrier protein (80 aa).

The Carrier domain occupies Asp-3–Ser-78. Ser-38 bears the O-(pantetheine 4'-phosphoryl)serine mark.

The protein belongs to the acyl carrier protein (ACP) family. In terms of processing, 4'-phosphopantetheine is transferred from CoA to a specific serine of apo-ACP by AcpS. This modification is essential for activity because fatty acids are bound in thioester linkage to the sulfhydryl of the prosthetic group.

The protein resides in the plastid. The protein localises to the chloroplast. Its pathway is lipid metabolism; fatty acid biosynthesis. Its function is as follows. Carrier of the growing fatty acid chain in fatty acid biosynthesis. This chain is Acyl carrier protein, found in Trieres chinensis (Marine centric diatom).